The following is a 177-amino-acid chain: ATP synthase subunit delta (177 aa).

Belongs to the ATPase delta chain family. As to quaternary structure, F-type ATPases have 2 components, F(1) - the catalytic core - and F(0) - the membrane proton channel. F(1) has five subunits: alpha(3), beta(3), gamma(1), delta(1), epsilon(1). F(0) has three main subunits: a(1), b(2) and c(10-14). The alpha and beta chains form an alternating ring which encloses part of the gamma chain. F(1) is attached to F(0) by a central stalk formed by the gamma and epsilon chains, while a peripheral stalk is formed by the delta and b chains.

The protein resides in the cell inner membrane. Its function is as follows. F(1)F(0) ATP synthase produces ATP from ADP in the presence of a proton or sodium gradient. F-type ATPases consist of two structural domains, F(1) containing the extramembraneous catalytic core and F(0) containing the membrane proton channel, linked together by a central stalk and a peripheral stalk. During catalysis, ATP synthesis in the catalytic domain of F(1) is coupled via a rotary mechanism of the central stalk subunits to proton translocation. This protein is part of the stalk that links CF(0) to CF(1). It either transmits conformational changes from CF(0) to CF(1) or is implicated in proton conduction. The chain is ATP synthase subunit delta from Vibrio vulnificus (strain CMCP6).